We begin with the raw amino-acid sequence, 295 residues long: Ribosomal protein L11 methyltransferase (295 aa).

4 residues coordinate S-adenosyl-L-methionine: T146, G167, D189, and N231.

The protein belongs to the methyltransferase superfamily. PrmA family.

It localises to the cytoplasm. The enzyme catalyses L-lysyl-[protein] + 3 S-adenosyl-L-methionine = N(6),N(6),N(6)-trimethyl-L-lysyl-[protein] + 3 S-adenosyl-L-homocysteine + 3 H(+). Its function is as follows. Methylates ribosomal protein L11. This chain is Ribosomal protein L11 methyltransferase, found in Vibrio parahaemolyticus serotype O3:K6 (strain RIMD 2210633).